Consider the following 259-residue polypeptide: uncharacterized protein (259 aa).

This sequence belongs to the methyltransferase superfamily.

This is an uncharacterized protein from Mycobacteroides abscessus (strain ATCC 19977 / DSM 44196 / CCUG 20993 / CIP 104536 / JCM 13569 / NCTC 13031 / TMC 1543 / L948) (Mycobacterium abscessus).